Reading from the N-terminus, the 531-residue chain is Zinc finger protein 837 (531 aa).

Residues 1–101 (MEAPAQKAGQ…CGPTSSQNPE (101 aa)) are disordered. Residues 24–50 (AREKRPEEPRPLEEDRAGSRPTQKGDL) show a composition bias toward basic and acidic residues. C2H2-type zinc fingers lie at residues 271 to 293 (YACD…QRIH), 299 to 321 (YECA…QKTH), 363 to 385 (YECA…RRVH), 391 to 413 (YACP…QRTH), 419 to 441 (YACP…QRAH), 447 to 469 (YGCS…ERLH), 475 to 497 (YICR…LRTH), and 503 to 525 (YACG…RKRH).

This sequence belongs to the krueppel C2H2-type zinc-finger protein family.

It is found in the nucleus. May be involved in transcriptional regulation. In Homo sapiens (Human), this protein is Zinc finger protein 837 (ZNF837).